Reading from the N-terminus, the 511-residue chain is 2-isopropylmalate synthase (511 aa).

Positions 5 to 267 (LIIFDTTLRD…DTNIDTMHIL (263 aa)) constitute a Pyruvate carboxyltransferase domain. Mn(2+) is bound by residues D14, H202, H204, and N238. The interval 393-511 (KLVSLKVCTE…TVTNKAHPQI (119 aa)) is regulatory domain.

Belongs to the alpha-IPM synthase/homocitrate synthase family. LeuA type 1 subfamily. In terms of assembly, homodimer. It depends on Mn(2+) as a cofactor.

Its subcellular location is the cytoplasm. It catalyses the reaction 3-methyl-2-oxobutanoate + acetyl-CoA + H2O = (2S)-2-isopropylmalate + CoA + H(+). The protein operates within amino-acid biosynthesis; L-leucine biosynthesis; L-leucine from 3-methyl-2-oxobutanoate: step 1/4. Functionally, catalyzes the condensation of the acetyl group of acetyl-CoA with 3-methyl-2-oxobutanoate (2-ketoisovalerate) to form 3-carboxy-3-hydroxy-4-methylpentanoate (2-isopropylmalate). In Vesicomyosocius okutanii subsp. Calyptogena okutanii (strain HA), this protein is 2-isopropylmalate synthase.